Reading from the N-terminus, the 479-residue chain is Cysteine--tRNA ligase (479 aa).

Zn(2+) is bound at residue Cys28. A 'HIGH' region motif is present at residues 30-40; that stretch reads PTVYDHAHLGH. Cys207, His232, and Glu236 together coordinate Zn(2+). Residues 264-268 carry the 'KMSKS' region motif; sequence KMSKS. Residue Lys267 coordinates ATP.

The protein belongs to the class-I aminoacyl-tRNA synthetase family. The cofactor is Zn(2+).

It localises to the cytoplasm. It catalyses the reaction tRNA(Cys) + L-cysteine + ATP = L-cysteinyl-tRNA(Cys) + AMP + diphosphate. The sequence is that of Cysteine--tRNA ligase from Methanococcus aeolicus (strain ATCC BAA-1280 / DSM 17508 / OCM 812 / Nankai-3).